Consider the following 276-residue polypeptide: NH(3)-dependent NAD(+) synthetase (276 aa).

43–50 (GISGGVDS) is a binding site for ATP. Mg(2+) is bound at residue aspartate 49. A deamido-NAD(+)-binding site is contributed by arginine 146. Threonine 166 contacts ATP. Glutamate 171 serves as a coordination point for Mg(2+). Residues lysine 179 and aspartate 186 each coordinate deamido-NAD(+). Residues lysine 195 and threonine 217 each coordinate ATP. 266 to 267 (HK) is a deamido-NAD(+) binding site.

The protein belongs to the NAD synthetase family. As to quaternary structure, homodimer.

It carries out the reaction deamido-NAD(+) + NH4(+) + ATP = AMP + diphosphate + NAD(+) + H(+). The protein operates within cofactor biosynthesis; NAD(+) biosynthesis; NAD(+) from deamido-NAD(+) (ammonia route): step 1/1. In terms of biological role, catalyzes the ATP-dependent amidation of deamido-NAD to form NAD. Uses ammonia as a nitrogen source. In Shewanella pealeana (strain ATCC 700345 / ANG-SQ1), this protein is NH(3)-dependent NAD(+) synthetase.